Here is a 530-residue protein sequence, read N- to C-terminus: Alpha-(1,3)-fucosyltransferase 4 (530 aa).

Disordered stretches follow at residues 1-48 and 66-113; these read MRRL…RAVP and HLGG…TPAD. The Cytoplasmic portion of the chain corresponds to 1–147; it reads MRRLWGAARK…GGRRRWRRGR (147 aa). Basic and acidic residues predominate over residues 88-106; it reads ASGERQRRLEPQLQHESRC. The helical; Signal-anchor for type II membrane protein transmembrane segment at 148 to 172 threads the bilayer; sequence GLPWTVCVLAAAGLTCTALITYACW. Residues 173–530 are Lumenal-facing; that stretch reads GQLPPLPWAS…IRNLASWFER (358 aa). N216 and N315 each carry an N-linked (GlcNAc...) asparagine glycan.

This sequence belongs to the glycosyltransferase 10 family.

Its subcellular location is the golgi apparatus. The protein resides in the golgi stack membrane. The enzyme catalyses a beta-D-galactosyl-(1-&gt;4)-N-acetyl-beta-D-glucosaminyl derivative + GDP-beta-L-fucose = a beta-D-galactosyl-(1-&gt;4)-[alpha-L-fucosyl-(1-&gt;3)]-N-acetyl-beta-D-glucosaminyl derivative + GDP + H(+). It carries out the reaction an N-acetyl-alpha-neuraminyl-(2-&gt;3)-beta-D-galactosyl-(1-&gt;4)-N-acetyl-beta-D-glucosaminyl derivative + GDP-beta-L-fucose = an alpha-Neu5Ac-(2-&gt;3)-beta-D-Gal-(1-&gt;4)-[alpha-L-Fuc-(1-&gt;3)]-beta-D-GlcNAc derivative + GDP + H(+). It catalyses the reaction an alpha-Neu5Ac-(2-&gt;3)-beta-D-Gal-(1-&gt;4)-beta-D-GlcNAc-(1-&gt;3)-beta-D-Gal-(1-&gt;4)-beta-D-GlcNAc derivative + GDP-beta-L-fucose = an alpha-Neu5Ac-(2-&gt;3)-beta-D-Gal-(1-&gt;4)-beta-D-GlcNAc-(1-&gt;3)-beta-D-Gal-(1-&gt;4)-[alpha-L-Fuc-(1-&gt;3)]-beta-D-GlcNAc derivative + GDP + H(+). The catalysed reaction is an alpha-Neu5Ac-(2-&gt;3)-beta-D-Gal-(1-&gt;4)-beta-D-GlcNAc6S derivative + GDP-beta-L-fucose = an alpha-Neu5Ac-(2-&gt;3)-beta-D-Gal-(1-&gt;4)-[alpha-L-Fuc-(1-&gt;3)]-beta-D-GlcNAc6S derivative + GDP + H(+). The protein operates within protein modification; protein glycosylation. In terms of biological role, catalyzes alpha(1-&gt;3) linkage of fucosyl moiety transferred from GDP-beta-L-fucose to N-acetyl glucosamine (GlcNAc) within type 2 lactosamine (LacNAc, Gal-beta(1-&gt;4)GlcNAc) glycan attached to N- or O-linked glycoproteins. Robustly fucosylates nonsialylated distal LacNAc unit of the polylactosamine chain to form Lewis X antigen (CD15), a glycan determinant known to mediate important cellular functions in development and immunity. Fucosylates with lower efficiency sialylated LacNAc acceptors to form sialyl Lewis X and 6-sulfo sialyl Lewis X determinants that serve as recognition epitopes for C-type lectins. Together with FUT7 contributes to SELE, SELL and SELP selectin ligand biosynthesis and selectin-dependent lymphocyte homing, leukocyte migration and blood leukocyte homeostasis. In a cell type specific manner, may also fucosylate the internal LacNAc unit of the polylactosamine chain to form VIM-2 antigen that serves as recognition epitope for SELE. This is Alpha-(1,3)-fucosyltransferase 4 (FUT4) from Pan troglodytes (Chimpanzee).